The following is a 189-amino-acid chain: Mitochondrial FAD-linked sulfhydryl oxidase ERV1 (189 aa).

An ERV/ALR sulfhydryl oxidase domain is found at 83-183 (DPPDVEQLGR…FDCNFWEKRW (101 aa)). Residues 88–95 (EQLGRSSW), His-99, and Tyr-128 contribute to the FAD site. 2 disulfide bridges follow: Cys-130–Cys-133 and Cys-159–Cys-176. FAD contacts are provided by residues 159 to 171 (CEAH…KLRK) and 182 to 183 (RW).

In terms of assembly, homodimer. Interacts with MIA40, forming transient intermolecular disulfide bridges. FAD serves as cofactor.

The protein localises to the mitochondrion intermembrane space. It carries out the reaction 2 R'C(R)SH + O2 = R'C(R)S-S(R)CR' + H2O2. FAD-dependent sulfhydryl oxidase that catalyzes disulfide bond formation. Required for the import and folding of small cysteine-containing proteins in the mitochondrial intermembrane space (IMS). Forms a redox cycle with MIA40 that involves a disulfide relay system. Important for maintaining the cysteine residues in MIA40 in an oxidized state. Reduced ERV1 is reoxidized by cytochrome c. Required for the maturation of cytoplasmic, but not of mitochondrial Fe/S proteins. This chain is Mitochondrial FAD-linked sulfhydryl oxidase ERV1 (ERV1), found in Saccharomyces cerevisiae (strain ATCC 204508 / S288c) (Baker's yeast).